The chain runs to 327 residues: Vacuolar protein sorting-associated protein 26A (327 aa).

The interval 305-327 is disordered; it reads RNFHQRYESPEPRPSLSAEQPEM.

It belongs to the VPS26 family. In terms of assembly, component of the heterotrimeric retromer cargo-selective complex (CSC) which is believed to associate with variable sorting nexins to form functionally distinct retromer complex variants.

It is found in the cytoplasm. It localises to the endosome membrane. The protein resides in the early endosome. Acts as a component of the retromer cargo-selective complex (CSC). The CSC is believed to be the core functional component of retromer or respective retromer complex variants acting to prevent missorting of selected transmembrane cargo proteins into the lysosomal degradation pathway. Retromer mediates retrograde transport of cargo proteins from endosomes to the trans-Golgi network (TGN). In Danio rerio (Zebrafish), this protein is Vacuolar protein sorting-associated protein 26A (vps26a).